The primary structure comprises 370 residues: Ni-sirohydrochlorin a,c-diamide reductive cyclase complex, component CfbD (370 aa).

The protein belongs to the NifD/NifK/NifE/NifN family. Homodimer or monomer. The Ni-sirohydrochlorin a,c-diamide reductive cyclase complex is composed of a NifH homolog component CfbC and a NifD homolog component CfbD. [4Fe-4S] cluster serves as cofactor.

The catalysed reaction is Ni-sirohydrochlorin a,c-diamide + 3 AH2 + ATP + H2O = 15,17(3)-seco-F430-17(3)-acid + 3 A + ADP + phosphate. Its function is as follows. Involved in the biosynthesis of the unique nickel-containing tetrapyrrole coenzyme F430, the prosthetic group of methyl-coenzyme M reductase (MCR), which plays a key role in methanogenesis and anaerobic methane oxidation. Catalyzes both the six-electron reduction of the tetrahydroporphyrin ring system and the gamma-lactamization of the c-acetamide side chain of Ni-sirohydrochlorin a,c-diamide to yield 15,17(3)-seco-F430-17(3)-acid (seco-F430), the last intermediate in the biosynthesis of the coenzyme F430. The sequence is that of Ni-sirohydrochlorin a,c-diamide reductive cyclase complex, component CfbD from Methanosarcina acetivorans (strain ATCC 35395 / DSM 2834 / JCM 12185 / C2A).